Here is a 195-residue protein sequence, read N- to C-terminus: dCTP deaminase (195 aa).

Residues 109–114 (RSSLAR), D127, 135–137 (TLE), Y170, K177, and Q181 contribute to the dCTP site. E137 functions as the Proton donor/acceptor in the catalytic mechanism.

This sequence belongs to the dCTP deaminase family. As to quaternary structure, homotrimer.

The catalysed reaction is dCTP + H2O + H(+) = dUTP + NH4(+). It functions in the pathway pyrimidine metabolism; dUMP biosynthesis; dUMP from dCTP (dUTP route): step 1/2. Catalyzes the deamination of dCTP to dUTP. This is dCTP deaminase from Rhodospirillum rubrum (strain ATCC 11170 / ATH 1.1.1 / DSM 467 / LMG 4362 / NCIMB 8255 / S1).